We begin with the raw amino-acid sequence, 119 residues long: U-scoloptoxin(01)-Er1a (119 aa).

The N-terminal stretch at 1–22 (MEIHSNIILLLLIALFAIFVKM) is a signal peptide. The region spanning 39-97 (NFACSGKKPGFYADEGFDCQVYHMCSPEGQLTTYLCGPGTIFNQKKLVCDLPTNYNCAD) is the Chitin-binding type-2 domain. An intrachain disulfide couples cysteine 74 to cysteine 87.

It belongs to the scoloptoxin-01 family. Post-translationally, contains 3 disulfide bonds. In terms of tissue distribution, expressed by the venom gland.

The protein resides in the secreted. In Ethmostigmus rubripes (Giant centipede), this protein is U-scoloptoxin(01)-Er1a.